Reading from the N-terminus, the 688-residue chain is Glycine--tRNA ligase beta subunit (688 aa).

This sequence belongs to the class-II aminoacyl-tRNA synthetase family. Tetramer of two alpha and two beta subunits.

The protein localises to the cytoplasm. It catalyses the reaction tRNA(Gly) + glycine + ATP = glycyl-tRNA(Gly) + AMP + diphosphate. In Clostridioides difficile (strain 630) (Peptoclostridium difficile), this protein is Glycine--tRNA ligase beta subunit.